Reading from the N-terminus, the 150-residue chain is D-aminoacyl-tRNA deacylase (150 aa).

The short motif at 138–139 (GP) is the Gly-cisPro motif, important for rejection of L-amino acids element.

This sequence belongs to the DTD family. Homodimer.

Its subcellular location is the cytoplasm. The enzyme catalyses glycyl-tRNA(Ala) + H2O = tRNA(Ala) + glycine + H(+). The catalysed reaction is a D-aminoacyl-tRNA + H2O = a tRNA + a D-alpha-amino acid + H(+). Its function is as follows. An aminoacyl-tRNA editing enzyme that deacylates mischarged D-aminoacyl-tRNAs. Also deacylates mischarged glycyl-tRNA(Ala), protecting cells against glycine mischarging by AlaRS. Acts via tRNA-based rather than protein-based catalysis; rejects L-amino acids rather than detecting D-amino acids in the active site. By recycling D-aminoacyl-tRNA to D-amino acids and free tRNA molecules, this enzyme counteracts the toxicity associated with the formation of D-aminoacyl-tRNA entities in vivo and helps enforce protein L-homochirality. This chain is D-aminoacyl-tRNA deacylase, found in Chlorobium phaeobacteroides (strain DSM 266 / SMG 266 / 2430).